The chain runs to 1028 residues: Golgin subfamily A member 2 (1028 aa).

The disordered stretch occupies residues 1 to 112; sequence MADQNRQIKL…NRPLSSTESL (112 aa). Positions 40–60 are enriched in basic and acidic residues; the sequence is KGDQTDAPADRRSPENERVDV. The span at 74-87 shows a compositional bias: polar residues; it reads NPASAINTDNSAPQ. Coiled-coil stretches lie at residues 162-200, 233-388, 414-690, 738-769, and 799-840; these read NTQL…EQGA, ARQK…YAVQ, RDST…LLNG, LSRV…LTAL, and HEAL…LSGE. The tract at residues 259-280 is disordered; the sequence is RTLSSVSTQQKQHERHNKELEK. Positions 756–791 are disordered; the sequence is RRIHQDTRQQLTALSHDHHHHHHHEPHSTCAETDGS. Residues 944–981 form a disordered region; sequence AMDVSSSPQSSTAEIQSQSSERPAADPISSPSLRPQED. Positions 945 to 964 are enriched in polar residues; that stretch reads MDVSSSPQSSTAEIQSQSSE.

It belongs to the GOLGA2 family.

It localises to the golgi apparatus. It is found in the cis-Golgi network membrane. The protein localises to the endoplasmic reticulum-Golgi intermediate compartment membrane. Its subcellular location is the cytoplasm. The protein resides in the cytoskeleton. It localises to the spindle pole. In terms of biological role, peripheral membrane component of the cis-Golgi stack that acts as a membrane skeleton that maintains the structure of the Golgi apparatus, and as a vesicle thether that facilitates vesicle fusion to the Golgi membrane. Required for normal protein transport from the endoplasmic reticulum to the Golgi apparatus and the cell membrane. Plays a central role in mitotic Golgi disassembly. Also plays a key role in spindle pole assembly and centrosome organization. It probably promotes mitotic spindle pole assembly by activating assembly factors to nucleate microtubules around the Golgi and capture them to couple mitotic membranes to the spindle. Also required for the Golgi ribbon formation and glycosylation of membrane and secretory proteins. This is Golgin subfamily A member 2 from Danio rerio (Zebrafish).